The following is a 932-amino-acid chain: Glycine dehydrogenase (decarboxylating) (932 aa).

N6-(pyridoxal phosphate)lysine is present on Lys685.

It belongs to the GcvP family. In terms of assembly, the glycine cleavage system is composed of four proteins: P, T, L and H. It depends on pyridoxal 5'-phosphate as a cofactor.

It catalyses the reaction N(6)-[(R)-lipoyl]-L-lysyl-[glycine-cleavage complex H protein] + glycine + H(+) = N(6)-[(R)-S(8)-aminomethyldihydrolipoyl]-L-lysyl-[glycine-cleavage complex H protein] + CO2. The glycine cleavage system catalyzes the degradation of glycine. The P protein binds the alpha-amino group of glycine through its pyridoxal phosphate cofactor; CO(2) is released and the remaining methylamine moiety is then transferred to the lipoamide cofactor of the H protein. The polypeptide is Glycine dehydrogenase (decarboxylating) (Brucella abortus (strain S19)).